The following is a 580-amino-acid chain: Glyco-Gag protein (580 aa).

Residues 1 to 51 (MSGASSGTAIGAHLFGVSPEYRVLIGDGGAGPSKSLSEVSFSVWYRSRAAR) lie on the Cytoplasmic side of the membrane. A helical transmembrane segment spans residues 52–72 (LVILCLVASFLVPCLTFLIAE). The Extracellular portion of the chain corresponds to 73-580 (AVMGQTVTTP…ANSTLLNLED (508 aa)). Residue Asn134 is glycosylated (N-linked (GlcNAc...) asparagine; by host). 3 disordered regions span residues 171–282 (VRPF…NRPQ), 491–514 (ETPE…RHKE), and 560–580 (RDCP…NLED). The segment covering 174–193 (FLPPPKPPTPLPQPLSPQPS) has biased composition (pro residues). A compositionally biased stretch (low complexity) spans 194-203 (APLTSSLYPV). 2 stretches are compositionally biased toward pro residues: residues 204 to 220 (VPKP…PDPS) and 230 to 245 (EPPP…PSGP). Basic and acidic residues predominate over residues 491–508 (ETPEEREERLWQRQEERD). The segment covering 571–580 (ANSTLLNLED) has biased composition (polar residues). Asn572 carries N-linked (GlcNAc...) asparagine; by host glycosylation.

In terms of processing, glycosylated by host. Post-translationally, cleaved by host near the middle of the molecule, releasing the c-terminal half containing capsid and nucleoprotein domains op GAG.

It is found in the host cell membrane. Plays a role in viral particle release. Presumably acts by facilitating the fission of the virion bud at the cell surface. The sequence is that of Glyco-Gag protein from Feline leukemia virus.